A 1342-amino-acid polypeptide reads, in one-letter code: Restriction of telomere capping protein 1 (1342 aa).

The tract at residues 1-39 (MSLSPHVENASIPKGSTPIPKNRNVSSIGKGEFLGSSSS) is disordered. WD repeat units lie at residues 207-248 (NKFS…SIDN), 256-296 (EHTR…SKSS), 305-342 (TASDSIRDVKWMPGYNFASKNDQGSSTYGNLKSGYKFA), 367-406 (AHTGPGLCLNWHPNQEYIATGGRDGKCCLWFVGDNANAAE), 439-486 (NTGY…IPKH), and 489-527 (LSETPSLGLVWWDENLIFNIDKGTRINGWDINKEPTVLE). Disordered regions lie at residues 559-593 (PELQPTSSTTCKKHPGTIKNPKNGNPENQGIIGGI), 600-619 (TGLTSFTPERPPTLKAGPTF), 630-651 (ASSFNSSSASLTSLTPQTENRE), 736-766 (KNATETHGDNTTTTNNNDDGDDDDDDDDDDD), and 788-831 (LMNE…DRSR). A compositionally biased stretch (low complexity) spans 630 to 644 (ASSFNSSSASLTSLT). The segment covering 753 to 766 (DDGDDDDDDDDDDD) has biased composition (acidic residues). Low complexity predominate over residues 815–824 (SSISSISASR). The WD 7 repeat unit spans residues 844-884 (KIQTLVDLISIATHNASVYLSIDDLTNFKIWILIRDSLLWD). Disordered stretches follow at residues 942-962 (AFRANSDEPSDAEKKPVSKLK) and 1014-1043 (DEHEHQEEEQPHDSPTKSAQFHASPIAKSI). Basic and acidic residues-rich tracts occupy residues 952–962 (DAEKKPVSKLK) and 1016–1028 (HEHQEEEQPHDSP). Residues Ser-1037, Ser-1081, Ser-1088, Ser-1090, Ser-1124, and Ser-1134 each carry the phosphoserine modification. WD repeat units follow at residues 1130-1170 (SRPD…KQLY) and 1217-1256 (LFGIAADVLKYCPFEDIMGSEGDQSSIRLFCERCGELITN). The RING-type; degenerate zinc finger occupies 1294-1336 (CVLCERPLKKLTMVILPCGHEGHFQCIQEWFLDENEQECPGGC).

This sequence belongs to the WD repeat RTC1 family.

It localises to the vacuole. In terms of biological role, may be involved in a process influencing telomere capping. This chain is Restriction of telomere capping protein 1 (RTC1), found in Saccharomyces cerevisiae (strain Lalvin EC1118 / Prise de mousse) (Baker's yeast).